The following is a 493-amino-acid chain: Glutamate--tRNA ligase (493 aa).

The 'HIGH' region motif lies at 10 to 20; the sequence is PSPTGDPHVGT. The short motif at 251 to 255 is the 'KMSKS' region element; it reads KLSKR. Residue lysine 254 coordinates ATP.

It belongs to the class-I aminoacyl-tRNA synthetase family. Glutamate--tRNA ligase type 1 subfamily. As to quaternary structure, monomer.

It localises to the cytoplasm. It catalyses the reaction tRNA(Glu) + L-glutamate + ATP = L-glutamyl-tRNA(Glu) + AMP + diphosphate. Functionally, catalyzes the attachment of glutamate to tRNA(Glu) in a two-step reaction: glutamate is first activated by ATP to form Glu-AMP and then transferred to the acceptor end of tRNA(Glu). This Pseudomonas fluorescens (strain Pf0-1) protein is Glutamate--tRNA ligase.